The sequence spans 283 residues: tRNA (guanine-N(1)-)-methyltransferase (283 aa).

S-adenosyl-L-methionine-binding positions include G113 and I133–L138.

This sequence belongs to the RNA methyltransferase TrmD family. In terms of assembly, homodimer.

The protein resides in the cytoplasm. It catalyses the reaction guanosine(37) in tRNA + S-adenosyl-L-methionine = N(1)-methylguanosine(37) in tRNA + S-adenosyl-L-homocysteine + H(+). In terms of biological role, specifically methylates guanosine-37 in various tRNAs. The sequence is that of tRNA (guanine-N(1)-)-methyltransferase from Parafrankia sp. (strain EAN1pec).